The chain runs to 141 residues: Nucleoside diphosphate kinase (141 aa).

K11, F59, R87, T93, R104, and N114 together coordinate ATP. Residue H117 is the Pros-phosphohistidine intermediate of the active site.

This sequence belongs to the NDK family. In terms of assembly, homotetramer. Mg(2+) is required as a cofactor.

It localises to the cytoplasm. The enzyme catalyses a 2'-deoxyribonucleoside 5'-diphosphate + ATP = a 2'-deoxyribonucleoside 5'-triphosphate + ADP. It carries out the reaction a ribonucleoside 5'-diphosphate + ATP = a ribonucleoside 5'-triphosphate + ADP. Major role in the synthesis of nucleoside triphosphates other than ATP. The ATP gamma phosphate is transferred to the NDP beta phosphate via a ping-pong mechanism, using a phosphorylated active-site intermediate. The sequence is that of Nucleoside diphosphate kinase from Pseudomonas putida (strain W619).